A 282-amino-acid polypeptide reads, in one-letter code: Undecaprenyl-diphosphatase 1 (282 aa).

8 helical membrane passes run 1–21 (MLLLQIVVLALIQGITEVLPL), 46–66 (GVALDVAVHLGTLGAVALYFW), 91–111 (AFLVVLGTLPAVATVLLLAHF), 117–137 (SPGLATIGWTTLGFGLLLGVI), 150–170 (MGGIDCLLIGLAQCLALLPGV), 193–213 (FSMLLSIPAIAGAATLVGLDL), 226–246 (LIAAVTAFLAAFLAVAAMMAW), and 260–280 (VLLGAALLALAYLGPDLAPFL).

Belongs to the UppP family.

It localises to the cell inner membrane. The enzyme catalyses di-trans,octa-cis-undecaprenyl diphosphate + H2O = di-trans,octa-cis-undecaprenyl phosphate + phosphate + H(+). In terms of biological role, catalyzes the dephosphorylation of undecaprenyl diphosphate (UPP). Confers resistance to bacitracin. The chain is Undecaprenyl-diphosphatase 1 from Rhodospirillum rubrum (strain ATCC 11170 / ATH 1.1.1 / DSM 467 / LMG 4362 / NCIMB 8255 / S1).